Consider the following 470-residue polypeptide: Sulfate adenylyltransferase subunit 1 (470 aa).

A tr-type G domain is found at Lys22–Ala236. The G1 stretch occupies residues Gly31 to Ser38. Gly31 to Ser38 contributes to the GTP binding site. Residues Gly89–Asp93 are G2. The segment at Asp110–Gly113 is G3. Residues Asp110–His114 and Asn165–Asp168 contribute to the GTP site. The G4 stretch occupies residues Asn165–Asp168. The segment at Ser202–Leu204 is G5.

The protein belongs to the TRAFAC class translation factor GTPase superfamily. Classic translation factor GTPase family. CysN/NodQ subfamily. In terms of assembly, heterodimer composed of CysD, the smaller subunit, and CysN.

The catalysed reaction is sulfate + ATP + H(+) = adenosine 5'-phosphosulfate + diphosphate. Its pathway is sulfur metabolism; hydrogen sulfide biosynthesis; sulfite from sulfate: step 1/3. Functionally, with CysD forms the ATP sulfurylase (ATPS) that catalyzes the adenylation of sulfate producing adenosine 5'-phosphosulfate (APS) and diphosphate, the first enzymatic step in sulfur assimilation pathway. APS synthesis involves the formation of a high-energy phosphoric-sulfuric acid anhydride bond driven by GTP hydrolysis by CysN coupled to ATP hydrolysis by CysD. This is Sulfate adenylyltransferase subunit 1 from Francisella tularensis subsp. novicida (strain U112).